Here is a 91-residue protein sequence, read N- to C-terminus: Small ribosomal subunit protein uS17 (91 aa).

Belongs to the universal ribosomal protein uS17 family. Part of the 30S ribosomal subunit.

Functionally, one of the primary rRNA binding proteins, it binds specifically to the 5'-end of 16S ribosomal RNA. The polypeptide is Small ribosomal subunit protein uS17 (Acidithiobacillus ferrooxidans (strain ATCC 23270 / DSM 14882 / CIP 104768 / NCIMB 8455) (Ferrobacillus ferrooxidans (strain ATCC 23270))).